The chain runs to 347 residues: S-adenosylmethionine:tRNA ribosyltransferase-isomerase (347 aa).

Belongs to the QueA family. Monomer.

The protein localises to the cytoplasm. It catalyses the reaction 7-aminomethyl-7-carbaguanosine(34) in tRNA + S-adenosyl-L-methionine = epoxyqueuosine(34) in tRNA + adenine + L-methionine + 2 H(+). Its pathway is tRNA modification; tRNA-queuosine biosynthesis. In terms of biological role, transfers and isomerizes the ribose moiety from AdoMet to the 7-aminomethyl group of 7-deazaguanine (preQ1-tRNA) to give epoxyqueuosine (oQ-tRNA). The chain is S-adenosylmethionine:tRNA ribosyltransferase-isomerase from Streptococcus thermophilus (strain CNRZ 1066).